A 455-amino-acid chain; its full sequence is Regulatory protein LuxO (455 aa).

The region spanning 1-112 (MVEDTASVAA…RLRVTVNNAI (112 aa)) is the Response regulatory domain. Asp47 bears the 4-aspartylphosphate mark. Residues 132-361 (FIGSSQTMQA…LQNVLRNVVV (230 aa)) form the Sigma-54 factor interaction domain. ATP contacts are provided by residues 160-167 (GESGTGKE) and 223-232 (ADGGTLFLDE).

Functionally, involved in the regulation of different processes depending on the cell density. Acts together with sigma-54 to repress, perhaps indirectly, some genes. The sequence is that of Regulatory protein LuxO (luxO) from Vibrio cholerae serotype O1 (strain ATCC 39315 / El Tor Inaba N16961).